Consider the following 262-residue polypeptide: Putative hydro-lyase ROP_32680 (262 aa).

This sequence belongs to the D-glutamate cyclase family.

This chain is Putative hydro-lyase ROP_32680, found in Rhodococcus opacus (strain B4).